A 259-amino-acid chain; its full sequence is DNA-directed RNA polymerase subunit Rpo3 (259 aa).

The protein belongs to the archaeal Rpo3/eukaryotic RPB3 RNA polymerase subunit family. Part of the RNA polymerase complex.

It is found in the cytoplasm. The enzyme catalyses RNA(n) + a ribonucleoside 5'-triphosphate = RNA(n+1) + diphosphate. Functionally, DNA-dependent RNA polymerase (RNAP) catalyzes the transcription of DNA into RNA using the four ribonucleoside triphosphates as substrates. In Thermococcus kodakarensis (strain ATCC BAA-918 / JCM 12380 / KOD1) (Pyrococcus kodakaraensis (strain KOD1)), this protein is DNA-directed RNA polymerase subunit Rpo3.